Consider the following 370-residue polypeptide: Putative transport protein YdiK (370 aa).

Over 1 to 17 (MVNVRQPRDVAQILLSV) the chain is Periplasmic. A helical transmembrane segment spans residues 18 to 38 (LFLAIMIVACLWIVQPFILGF). A topological domain (cytoplasmic) is located at residue A39. Residues 40–60 (WAGTVVIATWPVLLRLQKIMF) traverse the membrane as a helical segment. At 61 to 65 (GRRSL) the chain is on the periplasmic side. Residues 66-86 (AVLVMTLLLVMVFIIPIALLV) traverse the membrane as a helical segment. Over 87-106 (NSIVDGSGPLIKAISSGDMT) the chain is Cytoplasmic. The chain crosses the membrane as a helical span at residues 107–127 (LPDLAWLNTIPVIGAKLYAGW). Over 128-156 (HNLLDMGGTAIMAKVRPYIGTTTTWFVGQ) the chain is Periplasmic. A helical membrane pass occupies residues 157–177 (AAHIGRFMVHCALMLLFSALL). Topologically, residues 178 to 213 (YWRGEQVAQGIRHFATRLAGVRGDAAVLLAAQAIRA) are cytoplasmic. The helical transmembrane segment at 214 to 234 (VALGVVVTALVQAVLGGIGLA) threads the bilayer. Residues 235-248 (VSGVPYATLLTVLM) are Periplasmic-facing. Residues 249 to 269 (ILSCLVQLGPLPVLIPAIIWL) traverse the membrane as a helical segment. The Cytoplasmic portion of the chain corresponds to 270–274 (YWTGD). A helical membrane pass occupies residues 275 to 295 (TTWGTVLLVWSGVVGTLDNVI). Residues 296–308 (RPMLIRMGADLPL) are Periplasmic-facing. Residues 309–329 (ILILSGVIGGLIAFGMIGLFI) form a helical membrane-spanning segment. Residues 330 to 370 (GPVLLAVSWRLFAAWVEEVPPPTDQPEEILEELGEIEKPNK) lie on the Cytoplasmic side of the membrane.

This sequence belongs to the autoinducer-2 exporter (AI-2E) (TC 2.A.86) family.

The protein localises to the cell inner membrane. The sequence is that of Putative transport protein YdiK (ydiK) from Escherichia coli (strain K12).